Here is a 428-residue protein sequence, read N- to C-terminus: D-amino acid dehydrogenase (428 aa).

V3–Y17 contributes to the FAD binding site.

Belongs to the DadA oxidoreductase family. Requires FAD as cofactor.

The catalysed reaction is a D-alpha-amino acid + A + H2O = a 2-oxocarboxylate + AH2 + NH4(+). It functions in the pathway amino-acid degradation; D-alanine degradation; NH(3) and pyruvate from D-alanine: step 1/1. Functionally, oxidative deamination of D-amino acids. The chain is D-amino acid dehydrogenase from Burkholderia thailandensis (strain ATCC 700388 / DSM 13276 / CCUG 48851 / CIP 106301 / E264).